A 201-amino-acid polypeptide reads, in one-letter code: Cysteine dioxygenase type 1 (201 aa).

Fe cation contacts are provided by H86, H88, and H141. A cross-link (3'-(S-cysteinyl)-tyrosine (Cys-Tyr)) is located at residues 93–158 (CFLKLLQGQL…TEPAVSLHLY (66 aa)).

This sequence belongs to the cysteine dioxygenase family. Monomer. The cofactor is Fe cation. It depends on Ni(2+) as a cofactor. Zn(2+) serves as cofactor. Post-translationally, the thioether cross-link between Cys-93 and Tyr-158 plays a structural role through stabilizing the Fe(2+) ion, and prevents the production of highly damaging free hydroxyl radicals by holding the oxygen radical via hydroxyl hydrogen.

The catalysed reaction is L-cysteine + O2 = 3-sulfino-L-alanine + H(+). It functions in the pathway organosulfur biosynthesis; taurine biosynthesis; hypotaurine from L-cysteine: step 1/2. In terms of biological role, catalyzes the oxidation of cysteine to cysteine sulfinic acid with addition of molecular dioxygen. The sequence is that of Cysteine dioxygenase type 1 (cdo1) from Danio rerio (Zebrafish).